Consider the following 174-residue polypeptide: Mediator of RNA polymerase II transcription subunit 30 (174 aa).

The stretch at 113–166 forms a coiled coil; that stretch reads VEDDSSKLEDRMANQLRAASEERREVLEVNKKLKQKNQQLKMIMDQLRNLIWEI.

This sequence belongs to the Mediator complex subunit 30 family. In terms of assembly, component of the Mediator complex.

It localises to the nucleus. Component of the Mediator complex, a coactivator involved in the regulated transcription of nearly all RNA polymerase II-dependent genes. Mediator functions as a bridge to convey information from gene-specific regulatory proteins to the basal RNA polymerase II transcription machinery. Mediator is recruited to promoters by direct interactions with regulatory proteins and serves as a scaffold for the assembly of a functional preinitiation complex with RNA polymerase II and the general transcription factors. The chain is Mediator of RNA polymerase II transcription subunit 30 (med30) from Danio rerio (Zebrafish).